Reading from the N-terminus, the 148-residue chain is MKVLLIKDVKSLGKAGEIKEVADGYGKNFLIGKGLALHATTDVLNKHKAEQKKLALKEEQEIAQAKELAEKLNATKLTIKHKVGANGHLIGSVTNKEVSDALEQQFSIMIDKKNIALDNKIKTIGIYEVDCKLGHSIHAKLKIDVIAE.

Belongs to the bacterial ribosomal protein bL9 family.

Binds to the 23S rRNA. The polypeptide is Large ribosomal subunit protein bL9 (Aliarcobacter butzleri (strain RM4018) (Arcobacter butzleri)).